The following is a 583-amino-acid chain: MSELLSRIGSPSDVRALPEEALPLLCQELREDIISICGRVGGHLGASLGAVELIVALHRVFHSPQDALLFDVGHQTYAHKLLTGRRDRMHTLRHAGGIAPFLDPRESPHDALLAGHSCTAVSAALGVLEGRRQQGHRGHVVAVLGDGGLTGGLTFEGLNNAGGSSLPLVVVLNDNQMSISANVGAIPALLRTREARDFFEGLGFTYLGPVDGHDLPALIRALREARASSRPVVVHALTLKGKGFPPAEADTQTRGHAMGPYEWRDGKLVRSRGGQRTFSEAFAAVLEDAMARDPRVVAVTPAMLEGSALNALKARFPDRVHDVGIAEQHAVTFSAGLASAGARPVCCIYSTFLQRAYDQIIHDVCLPGLPVVFAVDRAGLVGADGATHQGTYDVASLRPLPDLHLWSPMVGEDLAPMLDTALAAPHASVIRFPRGTLPPLPEGLGAGEAPLRGARWLLRAEQPRLTLVTLGPLGIAALEAARGEPGWSVLDARCASPLDEAALLEAGRSGHVVVAEEGTTRGGLGSAVLELFAAHGLMARVRLMGMPDAFVPHGDARVQRAEQGLDAEGLRRAGLALLAGGGR.

Thiamine diphosphate contacts are provided by residues His74 and 115–117 (GHS). Asp146 contacts Mg(2+). Thiamine diphosphate-binding positions include 147-148 (GG), Asn175, Phe244, and Glu327. Asn175 contacts Mg(2+).

This sequence belongs to the transketolase family. DXPS subfamily. As to quaternary structure, homodimer. The cofactor is Mg(2+). Thiamine diphosphate serves as cofactor.

It carries out the reaction D-glyceraldehyde 3-phosphate + pyruvate + H(+) = 1-deoxy-D-xylulose 5-phosphate + CO2. The protein operates within metabolic intermediate biosynthesis; 1-deoxy-D-xylulose 5-phosphate biosynthesis; 1-deoxy-D-xylulose 5-phosphate from D-glyceraldehyde 3-phosphate and pyruvate: step 1/1. Functionally, catalyzes the acyloin condensation reaction between C atoms 2 and 3 of pyruvate and glyceraldehyde 3-phosphate to yield 1-deoxy-D-xylulose-5-phosphate (DXP). This chain is 1-deoxy-D-xylulose-5-phosphate synthase, found in Myxococcus xanthus (strain DK1622).